We begin with the raw amino-acid sequence, 294 residues long: 4-hydroxy-tetrahydrodipicolinate synthase (294 aa).

Pyruvate is bound at residue Thr-47. Tyr-135 functions as the Proton donor/acceptor in the catalytic mechanism. The Schiff-base intermediate with substrate role is filled by Lys-164. Val-206 serves as a coordination point for pyruvate.

This sequence belongs to the DapA family. Homotetramer; dimer of dimers.

Its subcellular location is the cytoplasm. The enzyme catalyses L-aspartate 4-semialdehyde + pyruvate = (2S,4S)-4-hydroxy-2,3,4,5-tetrahydrodipicolinate + H2O + H(+). Its pathway is amino-acid biosynthesis; L-lysine biosynthesis via DAP pathway; (S)-tetrahydrodipicolinate from L-aspartate: step 3/4. Its function is as follows. Catalyzes the condensation of (S)-aspartate-beta-semialdehyde [(S)-ASA] and pyruvate to 4-hydroxy-tetrahydrodipicolinate (HTPA). The sequence is that of 4-hydroxy-tetrahydrodipicolinate synthase from Lachnoclostridium phytofermentans (strain ATCC 700394 / DSM 18823 / ISDg) (Clostridium phytofermentans).